The chain runs to 100 residues: MNLTPREKDKLLISMAAMVARRRLERGVKLNHPEAIALITDFVVEGARDGRSVAELMEAGAHVLTRDQVMEGIAEMIHDIQVEATFPDGTKLVTVHEPIR.

It belongs to the urease gamma subunit family. In terms of assembly, heterotrimer of UreA (gamma), UreB (beta) and UreC (alpha) subunits. Three heterotrimers associate to form the active enzyme.

It localises to the cytoplasm. The enzyme catalyses urea + 2 H2O + H(+) = hydrogencarbonate + 2 NH4(+). It functions in the pathway nitrogen metabolism; urea degradation; CO(2) and NH(3) from urea (urease route): step 1/1. The polypeptide is Urease subunit gamma (Rhizobium meliloti (strain 1021) (Ensifer meliloti)).